The sequence spans 252 residues: N-acetylglucosaminyl-phosphatidylinositol de-N-acetylase (252 aa).

The helical transmembrane segment at 2–22 (EVVGLLCVAVAVLTWGFLRVW) threads the bilayer. The Cytoplasmic segment spans residues 23–252 (NSAERMRSPE…YMSVNSLQLL (230 aa)).

The protein belongs to the PIGL family.

Its subcellular location is the endoplasmic reticulum membrane. It catalyses the reaction a 6-(N-acetyl-alpha-D-glucosaminyl)-1-(1,2-diacyl-sn-glycero-3-phospho)-1D-myo-inositol + H2O = a 6-(alpha-D-glucosaminyl)-1-(1,2-diacyl-sn-glycero-3-phospho)-1D-myo-inositol + acetate. The protein operates within glycolipid biosynthesis; glycosylphosphatidylinositol-anchor biosynthesis. Catalyzes the second step of glycosylphosphatidylinositol (GPI) biosynthesis, which is the de-N-acetylation of N-acetylglucosaminyl-phosphatidylinositol. In Rattus norvegicus (Rat), this protein is N-acetylglucosaminyl-phosphatidylinositol de-N-acetylase (Pigl).